A 186-amino-acid polypeptide reads, in one-letter code: Large ribosomal subunit protein uL5 (186 aa).

The protein belongs to the universal ribosomal protein uL5 family. As to quaternary structure, part of the 50S ribosomal subunit; part of the 5S rRNA/L5/L18/L25 subcomplex. Contacts the 5S rRNA and the P site tRNA. Forms a bridge to the 30S subunit in the 70S ribosome.

In terms of biological role, this is one of the proteins that bind and probably mediate the attachment of the 5S RNA into the large ribosomal subunit, where it forms part of the central protuberance. In the 70S ribosome it contacts protein S13 of the 30S subunit (bridge B1b), connecting the 2 subunits; this bridge is implicated in subunit movement. Contacts the P site tRNA; the 5S rRNA and some of its associated proteins might help stabilize positioning of ribosome-bound tRNAs. The chain is Large ribosomal subunit protein uL5 from Mycoplasmopsis synoviae (strain 53) (Mycoplasma synoviae).